The following is a 441-amino-acid chain: Protein arginine methyltransferase NDUFAF7, mitochondrial (441 aa).

Residues 1–46 (MSVLLRSGLGPLCAVARAAIPFIWRGKYFSSGNEPAENPVTPMLRH) constitute a mitochondrion transit peptide.

The protein belongs to the NDUFAF7 family. Interacts with NDUFS2.

The protein resides in the mitochondrion. It carries out the reaction L-arginyl-[protein] + 2 S-adenosyl-L-methionine = N(omega),N(omega)'-dimethyl-L-arginyl-[protein] + 2 S-adenosyl-L-homocysteine + 2 H(+). Functionally, arginine methyltransferase involved in the assembly or stability of mitochondrial NADH:ubiquinone oxidoreductase complex (complex I). Acts by mediating symmetric dimethylation of 'Arg-118' of NDUFS2 after it assembles into the complex I, stabilizing the early intermediate complex. The polypeptide is Protein arginine methyltransferase NDUFAF7, mitochondrial (Homo sapiens (Human)).